Here is a 578-residue protein sequence, read N- to C-terminus: Raftlin (578 aa).

Glycine 2 carries N-myristoyl glycine lipidation. Cysteine 3 is lipidated: S-palmitoyl cysteine. Residues 169–184 show a composition bias toward polar residues; that stretch reads VNSAGSSAPVSTANST. 3 disordered regions span residues 169–271, 449–525, and 551–578; these read VNSA…VHEE, FSRE…PGGL, and CTGH…VEEN. A phosphoserine mark is found at serine 183, serine 199, and serine 220. The span at 185 to 206 shows a compositional bias: basic and acidic residues; that stretch reads EDARDAKNARGDHASLENEKPG. Residues 457-466 are compositionally biased toward basic residues; it reads RQMRKSKGKL. Positions 467 to 485 are enriched in basic and acidic residues; sequence SARDKQQAEENEKNLEDQS. A Phosphoserine modification is found at serine 505. Basic and acidic residues-rich tracts occupy residues 506 to 518 and 557 to 578; these read EEMK…DKGE and PGED…VEEN.

The protein belongs to the raftlin family. In terms of assembly, interacts with TLR4; the interaction occurs in response to lipopolysaccharide stimulation. Interacts with CLTC; the interaction occurs in response to pathogens. Interacts with AP2A1 and AP2B1. As to expression, expressed in B-cells (at protein level). Expressed in dendritic cells and macrophages.

It is found in the cell membrane. The protein localises to the cytoplasm. The protein resides in the membrane raft. Its subcellular location is the endosome. It localises to the early endosome. Functionally, involved in protein trafficking via association with clathrin and AP2 complex. Upon bacterial lipopolysaccharide stimulation, mediates internalization of TLR4 to endosomes in dendritic cells and macrophages; and internalization of poly(I:C) to TLR3-positive endosomes in myeloid dendritic cells and epithelial cells; resulting in activation of TICAM1-mediated signaling and subsequent IFNB1 production. Involved in T-cell antigen receptor-mediated signaling by regulating tyrosine kinase LCK localization, T-cell dependent antibody production and cytokine secretion. May regulate B-cell antigen receptor-mediated signaling. May play a pivotal role in the formation and/or maintenance of lipid rafts. The sequence is that of Raftlin (RFTN1) from Homo sapiens (Human).